A 184-amino-acid polypeptide reads, in one-letter code: ATP synthase subunit b (184 aa).

The chain crosses the membrane as a helical span at residues 19–39 (IIVGVILVLLLTWLIAKAVVP).

The protein belongs to the ATPase B chain family. F-type ATPases have 2 components, F(1) - the catalytic core - and F(0) - the membrane proton channel. F(1) has five subunits: alpha(3), beta(3), gamma(1), delta(1), epsilon(1). F(0) has three main subunits: a(1), b(2) and c(10-14). The alpha and beta chains form an alternating ring which encloses part of the gamma chain. F(1) is attached to F(0) by a central stalk formed by the gamma and epsilon chains, while a peripheral stalk is formed by the delta and b chains.

It localises to the cell membrane. Its function is as follows. F(1)F(0) ATP synthase produces ATP from ADP in the presence of a proton or sodium gradient. F-type ATPases consist of two structural domains, F(1) containing the extramembraneous catalytic core and F(0) containing the membrane proton channel, linked together by a central stalk and a peripheral stalk. During catalysis, ATP synthesis in the catalytic domain of F(1) is coupled via a rotary mechanism of the central stalk subunits to proton translocation. Functionally, component of the F(0) channel, it forms part of the peripheral stalk, linking F(1) to F(0). This Cutibacterium acnes (strain DSM 16379 / KPA171202) (Propionibacterium acnes) protein is ATP synthase subunit b.